Here is a 130-residue protein sequence, read N- to C-terminus: Putative F-box protein At1g77880 (130 aa).

The F-box domain maps to 18–64 (KVSIPYLPDDLLLNCLARISRLYYPTLSLVSKRFRSLLASTELYETR).

This is Putative F-box protein At1g77880 from Arabidopsis thaliana (Mouse-ear cress).